The chain runs to 450 residues: Probable glycine dehydrogenase (decarboxylating) subunit 1 (450 aa).

The protein belongs to the GcvP family. N-terminal subunit subfamily. In terms of assembly, the glycine cleavage system is composed of four proteins: P, T, L and H. In this organism, the P 'protein' is a heterodimer of two subunits.

The enzyme catalyses N(6)-[(R)-lipoyl]-L-lysyl-[glycine-cleavage complex H protein] + glycine + H(+) = N(6)-[(R)-S(8)-aminomethyldihydrolipoyl]-L-lysyl-[glycine-cleavage complex H protein] + CO2. The glycine cleavage system catalyzes the degradation of glycine. The P protein binds the alpha-amino group of glycine through its pyridoxal phosphate cofactor; CO(2) is released and the remaining methylamine moiety is then transferred to the lipoamide cofactor of the H protein. This chain is Probable glycine dehydrogenase (decarboxylating) subunit 1, found in Brevibacillus brevis (strain 47 / JCM 6285 / NBRC 100599).